The following is a 282-amino-acid chain: Anamorsin homolog (282 aa).

The segment at 5–151 (VDTNNFVLLL…EVGAKTALSL (147 aa)) is N-terminal SAM-like domain. The linker stretch occupies residues 152 to 196 (SFAPKPAQPKAETSAAQIWTLSAQDIDDEDVDLLDSDTLLDEDDL). Residues Cys-208, Cys-218, Cys-221, and Cys-223 each contribute to the [2Fe-2S] cluster site. Positions 208-223 (CGPGSGKKKACKNCTC) are fe-S binding site A. Cys-243, Cys-246, Cys-254, and Cys-257 together coordinate [4Fe-4S] cluster. Short sequence motifs (cx2C motif) lie at residues 243 to 246 (CGSC) and 254 to 257 (CSTC). Residues 243 to 257 (CGSCYLGDAFRCSTC) form a fe-S binding site B region.

This sequence belongs to the anamorsin family. In terms of assembly, monomer. It depends on [2Fe-2S] cluster as a cofactor. [4Fe-4S] cluster is required as a cofactor.

Its subcellular location is the cytoplasm. It localises to the mitochondrion intermembrane space. In terms of biological role, component of the cytosolic iron-sulfur (Fe-S) protein assembly (CIA) machinery. Required for the maturation of extramitochondrial Fe-S proteins. Part of an electron transfer chain functioning in an early step of cytosolic Fe-S biogenesis, facilitating the de novo assembly of a [4Fe-4S] cluster on the cytosolic Fe-S scaffold complex. Electrons are transferred from NADPH via a FAD- and FMN-containing diflavin oxidoreductase. Together with the diflavin oxidoreductase, also required for the assembly of the diferric tyrosyl radical cofactor of ribonucleotide reductase (RNR), probably by providing electrons for reduction during radical cofactor maturation in the catalytic small subunit. The polypeptide is Anamorsin homolog (Nematostella vectensis (Starlet sea anemone)).